Consider the following 54-residue polypeptide: Soricidin (54 aa).

Cystine bridges form between Cys-2–Cys-23, Cys-6–Cys-27, and Cys-9–Cys-41.

This sequence belongs to the opioid neuropeptide precursor family. Member of a multiprotein complex. Salivary gland.

It localises to the secreted. Its function is as follows. Paralytic toxin that immobilizes a mealworm for 7 days. Inhibits the transient receptor potential cation channel subfamily V member 6 (TRPV6). This is Soricidin from Blarina brevicauda (Northern short-tailed shrew).